The sequence spans 94 residues: Small ribosomal subunit protein bS16c (94 aa).

Belongs to the bacterial ribosomal protein bS16 family.

It localises to the plastid. The protein localises to the chloroplast. This is Small ribosomal subunit protein bS16c from Phalaenopsis aphrodite subsp. formosana (Moth orchid).